The chain runs to 345 residues: UDP-N-acetylenolpyruvoylglucosamine reductase (345 aa).

Positions 59 to 254 (VGGPAACLAR…RKATQPLGRP (196 aa)) constitute an FAD-binding PCMH-type domain. R209 is an active-site residue. Catalysis depends on C258, which acts as the Proton donor. E328 is a catalytic residue.

Belongs to the MurB family. Requires FAD as cofactor.

The protein localises to the cytoplasm. The enzyme catalyses UDP-N-acetyl-alpha-D-muramate + NADP(+) = UDP-N-acetyl-3-O-(1-carboxyvinyl)-alpha-D-glucosamine + NADPH + H(+). It participates in cell wall biogenesis; peptidoglycan biosynthesis. In terms of biological role, cell wall formation. This chain is UDP-N-acetylenolpyruvoylglucosamine reductase, found in Syntrophobacter fumaroxidans (strain DSM 10017 / MPOB).